An 89-amino-acid polypeptide reads, in one-letter code: Large ribosomal subunit protein bL27 (89 aa).

Residues 1 to 24 (MAHKKAGGSSRNGRDSDGRRLGVK) form a disordered region.

This sequence belongs to the bacterial ribosomal protein bL27 family.

The polypeptide is Large ribosomal subunit protein bL27 (Azorhizobium caulinodans (strain ATCC 43989 / DSM 5975 / JCM 20966 / LMG 6465 / NBRC 14845 / NCIMB 13405 / ORS 571)).